We begin with the raw amino-acid sequence, 171 residues long: 3-hydroxydecanoyl-[acyl-carrier-protein] dehydratase (171 aa).

His-71 is a catalytic residue.

This sequence belongs to the thioester dehydratase family. FabA subfamily. In terms of assembly, homodimer.

The protein localises to the cytoplasm. It carries out the reaction a (3R)-hydroxyacyl-[ACP] = a (2E)-enoyl-[ACP] + H2O. It catalyses the reaction (3R)-hydroxydecanoyl-[ACP] = (2E)-decenoyl-[ACP] + H2O. The catalysed reaction is (2E)-decenoyl-[ACP] = (3Z)-decenoyl-[ACP]. It participates in lipid metabolism; fatty acid biosynthesis. In terms of biological role, necessary for the introduction of cis unsaturation into fatty acids. Catalyzes the dehydration of (3R)-3-hydroxydecanoyl-ACP to E-(2)-decenoyl-ACP and then its isomerization to Z-(3)-decenoyl-ACP. Can catalyze the dehydratase reaction for beta-hydroxyacyl-ACPs with saturated chain lengths up to 16:0, being most active on intermediate chain length. The polypeptide is 3-hydroxydecanoyl-[acyl-carrier-protein] dehydratase (Rhizobium meliloti (strain 1021) (Ensifer meliloti)).